The chain runs to 275 residues: Large ribosomal subunit protein uL2c (275 aa).

Positions 224-275 are disordered; the sequence is AMNPVDHPHGGGEGRTPIGRKKPVTPWGYSALGKKSRKRNRYSDASILRRRE.

This sequence belongs to the universal ribosomal protein uL2 family. Part of the 50S ribosomal subunit.

It is found in the plastid. It localises to the chloroplast. This is Large ribosomal subunit protein uL2c (rpl2) from Picea abies (Norway spruce).